The primary structure comprises 469 residues: Adenosylhomocysteinase (469 aa).

3 residues coordinate substrate: threonine 63, aspartate 139, and glutamate 164. An NAD(+)-binding site is contributed by 165 to 167 (TTT). Substrate-binding residues include lysine 194 and aspartate 198. NAD(+) is bound by residues asparagine 199, 228–233 (GYGDVG), glutamate 251, asparagine 300, 321–323 (IGH), and asparagine 375.

It belongs to the adenosylhomocysteinase family. NAD(+) is required as a cofactor.

It is found in the cytoplasm. The catalysed reaction is S-adenosyl-L-homocysteine + H2O = L-homocysteine + adenosine. Its pathway is amino-acid biosynthesis; L-homocysteine biosynthesis; L-homocysteine from S-adenosyl-L-homocysteine: step 1/1. Its function is as follows. May play a key role in the regulation of the intracellular concentration of adenosylhomocysteine. The chain is Adenosylhomocysteinase from Pseudomonas putida (strain W619).